A 168-amino-acid polypeptide reads, in one-letter code: MKSLNRQTVSRFKKLSVPAAIMMILSTIISGIGTFLHYKEELMPSACANGWIQYDKHCYLDTNIKMSTDNAVYQCRKLRARLPRPDTRHLRVLFSIFYKDYWVSLKKTNDKWLDINNDKDIDISKLTNFKQLNSTTDAEACYIYKSGKLVKTVCKSTQSVLCVKKFYK.

Residues 1–14 lie on the Intravirion side of the membrane; that stretch reads MKSLNRQTVSRFKK. A helical transmembrane segment spans residues 15-37; it reads LSVPAAIMMILSTIISGIGTFLH. Residues 38 to 168 are Virion surface-facing; sequence YKEELMPSAC…SVLCVKKFYK (131 aa). The C-type lectin domain maps to 54–163; that stretch reads YDKHCYLDTN…CKSTQSVLCV (110 aa). Intrachain disulfides connect Cys-75/Cys-162 and Cys-141/Cys-154. N-linked (GlcNAc...) asparagine; by host glycosylation is present at Asn-133.

It belongs to the orthopoxvirus OPG162 protein family. As to quaternary structure, interacts with protein OPG161. Interacts with protein OPG164. Interacts with protein OPG190.

It localises to the virion membrane. The protein resides in the host Golgi apparatus. In terms of biological role, forms a complex with OPG162 and OPG190 to coordinate the incorporation of OPG164 into wrapped enveloped virion (EV) membranes and, subsequently, the production of actin tails. Therefore plays an essential role in efficient cell-to-cell spread of viral particles. This is Protein OPG162 (OPG162) from Vaccinia virus (strain Western Reserve) (VACV).